Here is a 371-residue protein sequence, read N- to C-terminus: uncharacterized protein (371 aa).

The protein belongs to the serpin family.

This is an uncharacterized protein from Pyrobaculum aerophilum (strain ATCC 51768 / DSM 7523 / JCM 9630 / CIP 104966 / NBRC 100827 / IM2).